Reading from the N-terminus, the 829-residue chain is Periplasmic nitrate reductase (829 aa).

The segment at residues 1-30 (MKLSRRDFMKANAVAAAAAVAGVSAPTLAA) is a signal peptide (tat-type signal). Positions 41–97 (IKWDKAPCRFCGTGCSVLVGSQDGRVVATQGDPDAPVNRGLNCIKGYFLSKIMYGED) constitute a 4Fe-4S Mo/W bis-MGD-type domain. C48, C51, C55, and C83 together coordinate [4Fe-4S] cluster. Mo-bis(molybdopterin guanine dinucleotide)-binding positions include K85, Q152, N177, C181, 214-221 (WGSNMAEM), 245-249 (STFEH), 264-266 (QTD), M374, Q378, N484, 510-511 (SD), K533, D560, and 719-728 (TGRVLEHWHT). F795 contributes to the substrate binding site. Mo-bis(molybdopterin guanine dinucleotide) contacts are provided by N803 and K820.

It belongs to the prokaryotic molybdopterin-containing oxidoreductase family. NasA/NapA/NarB subfamily. In terms of assembly, component of the periplasmic nitrate reductase NapAB complex composed of NapA and NapB. [4Fe-4S] cluster serves as cofactor. Requires Mo-bis(molybdopterin guanine dinucleotide) as cofactor. Predicted to be exported by the Tat system. The position of the signal peptide cleavage has not been experimentally proven.

It is found in the periplasm. The enzyme catalyses 2 Fe(II)-[cytochrome] + nitrate + 2 H(+) = 2 Fe(III)-[cytochrome] + nitrite + H2O. In terms of biological role, catalytic subunit of the periplasmic nitrate reductase complex NapAB. Receives electrons from NapB and catalyzes the reduction of nitrate to nitrite. In Aeromonas salmonicida (strain A449), this protein is Periplasmic nitrate reductase.